We begin with the raw amino-acid sequence, 949 residues long: Valine--tRNA ligase (949 aa).

The 'HIGH' region signature appears at 45–55 (PNVTGVLHMGH). A 'KMSKS' region motif is present at residues 561–565 (KMSKS). Residue Lys-564 coordinates ATP. Positions 882-949 (EELLKQEKTR…EIKEKLMTLP (68 aa)) form a coiled coil.

The protein belongs to the class-I aminoacyl-tRNA synthetase family. ValS type 1 subfamily. In terms of assembly, monomer.

Its subcellular location is the cytoplasm. It carries out the reaction tRNA(Val) + L-valine + ATP = L-valyl-tRNA(Val) + AMP + diphosphate. Functionally, catalyzes the attachment of valine to tRNA(Val). As ValRS can inadvertently accommodate and process structurally similar amino acids such as threonine, to avoid such errors, it has a 'posttransfer' editing activity that hydrolyzes mischarged Thr-tRNA(Val) in a tRNA-dependent manner. In Protochlamydia amoebophila (strain UWE25), this protein is Valine--tRNA ligase.